The primary structure comprises 422 residues: MRIALLTMGSRGDVQPFVALGTGLRARGHEVVLGAPEALRPLVEQAGLEYRATPGDPDGFFTMPEVVETLRRGPAMRDLMKALPPAPEEYDQEVLDRIERAGEGVDLVVHAPLTVTTALGEPSTPWLSVNWWPNTSTWTFPAVESGQRRMGPLTPLYNRLTHWRAEREDWGWRRAEVNEFRGRRGLPPFGKSSPLRRLGHPRPHLYPFSPSVLPKPRDWPGQCHVTGYWFWDQPGWRPSPELEDFLADGEPPVLLTLGSTWPVHRQEEMVEYAVAAARGARRRLLLVGGPEGALPGDALRVPSADYSWLMPRTAAVVHHGGFGTTADAVRAGVPQVLVPVFADHPFWAARLRRMGTAARPVPLARMNREALAASVRTAVTDPAMAVRARRLGEAVAAERGVENACVLIEEWAETRTTAHTPG.

The protein belongs to the glycosyltransferase 28 family.

It catalyses the reaction 5-O-beta-D-mycaminosyltylonolide + dTDP-6-deoxy-alpha-D-allose = demethyllactenocin + dTDP + H(+). Its function is as follows. Involved in the biosynthesis of the macrolide antibiotic tylosin derived from the polyketide lactone tylactone. Catalyzes the transfer of 6-deoxy-alpha-D-allose from dTDP-6-deoxy-alpha-D-allose to O-mycaminosyltylonolide (OMT) to yield demethyllactenocin. The polypeptide is O-mycaminosyltylonolide 6-deoxyallosyltransferase (Streptomyces fradiae (Streptomyces roseoflavus)).